Reading from the N-terminus, the 230-residue chain is Uracil-DNA glycosylase (230 aa).

The active-site Proton acceptor is Asp71.

This sequence belongs to the uracil-DNA glycosylase (UDG) superfamily. UNG family.

It is found in the cytoplasm. The catalysed reaction is Hydrolyzes single-stranded DNA or mismatched double-stranded DNA and polynucleotides, releasing free uracil.. Its function is as follows. Excises uracil residues from the DNA which can arise as a result of misincorporation of dUMP residues by DNA polymerase or due to deamination of cytosine. In Tropheryma whipplei (strain TW08/27) (Whipple's bacillus), this protein is Uracil-DNA glycosylase.